An 835-amino-acid polypeptide reads, in one-letter code: Microcephalin (835 aa).

Positions 1–93 (MAAPILKDVV…AHIDESLFPA (93 aa)) constitute a BRCT 1 domain. Phosphoserine is present on residues Ser-279, Ser-287, Ser-296, and Ser-333. Disordered regions lie at residues 332–376 (LSPT…RKRS) and 417–442 (SPDNLKERNSENLPPESQLPSSPAQF). Phosphothreonine is present on Thr-335. Over residues 343 to 361 (LLIHSRPRSSSVKRKRVSH) the composition is skewed to basic residues. Residue Ser-548 is modified to Phosphoserine. Residues 555–583 (AVDLKSTQNKGTTSKISNSSEGEAQSEHE) form a disordered region. The segment covering 559 to 577 (KSTQNKGTTSKISNSSEGE) has biased composition (polar residues). BRCT domains are found at residues 640–730 (SGRG…PFEL) and 751–833 (YRGT…NYLL).

As to quaternary structure, interacts with CDC27 and maybe other components of the APC/C complex. Interacts with histone variant H2AX under DNA damage conditions.

The protein localises to the cytoplasm. It is found in the cytoskeleton. The protein resides in the microtubule organizing center. Its subcellular location is the centrosome. In terms of biological role, implicated in chromosome condensation and DNA damage induced cellular responses. May play a role in neurogenesis and regulation of the size of the cerebral cortex. This is Microcephalin from Pan troglodytes (Chimpanzee).